The primary structure comprises 197 residues: Imidazoleglycerol-phosphate dehydratase (197 aa).

The protein belongs to the imidazoleglycerol-phosphate dehydratase family.

The protein resides in the cytoplasm. It catalyses the reaction D-erythro-1-(imidazol-4-yl)glycerol 3-phosphate = 3-(imidazol-4-yl)-2-oxopropyl phosphate + H2O. Its pathway is amino-acid biosynthesis; L-histidine biosynthesis; L-histidine from 5-phospho-alpha-D-ribose 1-diphosphate: step 6/9. The protein is Imidazoleglycerol-phosphate dehydratase of Azorhizobium caulinodans (strain ATCC 43989 / DSM 5975 / JCM 20966 / LMG 6465 / NBRC 14845 / NCIMB 13405 / ORS 571).